A 320-amino-acid chain; its full sequence is Endolytic peptidoglycan transglycosylase RlpA (320 aa).

Belongs to the RlpA family.

In terms of biological role, lytic transglycosylase with a strong preference for naked glycan strands that lack stem peptides. In Rickettsia prowazekii (strain Madrid E), this protein is Endolytic peptidoglycan transglycosylase RlpA.